Reading from the N-terminus, the 320-residue chain is Cytochrome f (320 aa).

The signal sequence occupies residues 1 to 35 (MQNRNTFSWIKEQMTRSISVSIMIYVITRTAISNA). The heme site is built by tyrosine 36, cysteine 56, cysteine 59, and histidine 60. The chain crosses the membrane as a helical span at residues 286 to 306 (VQGLLFFLASVILAQIFLVLK).

The protein belongs to the cytochrome f family. As to quaternary structure, the 4 large subunits of the cytochrome b6-f complex are cytochrome b6, subunit IV (17 kDa polypeptide, petD), cytochrome f and the Rieske protein, while the 4 small subunits are PetG, PetL, PetM and PetN. The complex functions as a dimer. Heme serves as cofactor.

It is found in the plastid. The protein resides in the chloroplast thylakoid membrane. Functionally, component of the cytochrome b6-f complex, which mediates electron transfer between photosystem II (PSII) and photosystem I (PSI), cyclic electron flow around PSI, and state transitions. This is Cytochrome f from Platanus occidentalis (Sycamore).